Reading from the N-terminus, the 448-residue chain is Probable 3-ketoacyl-CoA thiolase (448 aa).

The active-site Acyl-thioester intermediate is Cys-110. Active-site proton acceptor residues include His-402 and Cys-432.

It belongs to the thiolase-like superfamily. Thiolase family.

It is found in the mitochondrion. It carries out the reaction an acyl-CoA + acetyl-CoA = a 3-oxoacyl-CoA + CoA. It functions in the pathway lipid metabolism; fatty acid beta-oxidation. Its function is as follows. Mitochondrial enzyme that catalyzes reactions of the mitochondrial beta-oxidation pathway. The protein is Probable 3-ketoacyl-CoA thiolase of Caenorhabditis elegans.